A 453-amino-acid chain; its full sequence is DNA repair protein RadA (453 aa).

The segment at 10 to 27 adopts a C4-type zinc-finger fold; the sequence is CQECGYQSPKYLGRCPNC. Position 95–102 (95–102) interacts with ATP; sequence GDPGIGKS. The RadA KNRFG motif motif lies at 251 to 255; sequence KNRFG. The interval 350-453 is lon-protease-like; sequence DAYLKSAGGV…VGQVLNAVFS (104 aa).

It belongs to the RecA family. RadA subfamily.

Functionally, DNA-dependent ATPase involved in processing of recombination intermediates, plays a role in repairing DNA breaks. Stimulates the branch migration of RecA-mediated strand transfer reactions, allowing the 3' invading strand to extend heteroduplex DNA faster. Binds ssDNA in the presence of ADP but not other nucleotides, has ATPase activity that is stimulated by ssDNA and various branched DNA structures, but inhibited by SSB. Does not have RecA's homology-searching function. This Streptococcus pyogenes serotype M1 protein is DNA repair protein RadA.